The chain runs to 177 residues: Alkyl hydroperoxide reductase AhpD (177 aa).

Catalysis depends on cysteine 131, which acts as the Proton donor. Cysteine 131 and cysteine 134 are oxidised to a cystine. Cysteine 134 functions as the Cysteine sulfenic acid (-SOH) intermediate in the catalytic mechanism.

The protein belongs to the AhpD family. In terms of assembly, homotrimer.

It catalyses the reaction N(6)-[(R)-dihydrolipoyl]-L-lysyl-[lipoyl-carrier protein] + a hydroperoxide = N(6)-[(R)-lipoyl]-L-lysyl-[lipoyl-carrier protein] + an alcohol + H2O. Its function is as follows. Antioxidant protein with alkyl hydroperoxidase activity. Required for the reduction of the AhpC active site cysteine residues and for the regeneration of the AhpC enzyme activity. In Streptomyces griseus subsp. griseus (strain JCM 4626 / CBS 651.72 / NBRC 13350 / KCC S-0626 / ISP 5235), this protein is Alkyl hydroperoxide reductase AhpD.